The sequence spans 38 residues: Large ribosomal subunit protein bL36A (38 aa).

Belongs to the bacterial ribosomal protein bL36 family.

The sequence is that of Large ribosomal subunit protein bL36A from Pseudomonas aeruginosa (strain UCBPP-PA14).